A 354-amino-acid polypeptide reads, in one-letter code: Homeobox-leucine zipper protein HOX27 (354 aa).

A disordered region spans residues 98–175 (SVAAGAPGME…DDEGASARKK (78 aa)). Residues 148 to 157 (QGGGGGGGGE) show a composition bias toward gly residues. The homeobox DNA-binding region spans 171–230 (SARKKLRLSKEQSAFLEESFKEHSTLNPKQKVALAKQLNLRPRQVEVWFQNRRARTKLKQ). Residues 229–273 (KQTEVDCEYLKRCCETLTEENRRLHKELAELRALKTARPFYMHLP) form a leucine-zipper region. The segment at 294–323 (STSAPAAATSPAAAPTAAARTAVASPEPHR) is disordered.

This sequence belongs to the HD-ZIP homeobox family. Class II subfamily. As to expression, expressed in seedlings, roots, stems, leaf sheaths and blades and panicles.

It localises to the nucleus. In terms of biological role, probable transcription factor. This Oryza sativa subsp. japonica (Rice) protein is Homeobox-leucine zipper protein HOX27 (HOX27).